The sequence spans 238 residues: 2,3,4,5-tetrahydropyridine-2,6-dicarboxylate N-acetyltransferase (238 aa).

This sequence belongs to the transferase hexapeptide repeat family. DapH subfamily.

The enzyme catalyses (S)-2,3,4,5-tetrahydrodipicolinate + acetyl-CoA + H2O = L-2-acetamido-6-oxoheptanedioate + CoA. The protein operates within amino-acid biosynthesis; L-lysine biosynthesis via DAP pathway; LL-2,6-diaminopimelate from (S)-tetrahydrodipicolinate (acetylase route): step 1/3. In terms of biological role, catalyzes the transfer of an acetyl group from acetyl-CoA to tetrahydrodipicolinate. In Clostridioides difficile (strain 630) (Peptoclostridium difficile), this protein is 2,3,4,5-tetrahydropyridine-2,6-dicarboxylate N-acetyltransferase.